The primary structure comprises 232 residues: Histone H1B (232 aa).

Residues 1–18 show a composition bias toward low complexity; sequence MSDPAVEVTPAVPVASPA. Disordered regions lie at residues 1–44 and 99–232; these read MSDP…PPVS and QTKG…AKKA. The 75-residue stretch at 39–113 folds into the H15 domain; it reads THPPVSEMVV…GASGSFKLPA (75 aa). 5 stretches are compositionally biased toward basic residues: residues 132–141, 147–173, 181–197, 205–214, and 222–232; these read KPKKAAAKPK, KVKK…KTTK, AAKK…KPKA, KRAAAPKAKK, and KAAKKPAAKKA.

The protein belongs to the histone H1/H5 family.

Its subcellular location is the nucleus. The protein localises to the chromosome. Functionally, histones H1 are necessary for the condensation of nucleosome chains into higher-order structures. The polypeptide is Histone H1B (Chironomus tentans (Midge)).